A 319-amino-acid polypeptide reads, in one-letter code: Acetyl-coenzyme A carboxylase carboxyl transferase subunit alpha (319 aa).

The region spanning 39–293 (RLQKKSNDLT…KAVLEKQLHE (255 aa)) is the CoA carboxyltransferase C-terminal domain.

Belongs to the AccA family. As to quaternary structure, acetyl-CoA carboxylase is a heterohexamer composed of biotin carboxyl carrier protein (AccB), biotin carboxylase (AccC) and two subunits each of ACCase subunit alpha (AccA) and ACCase subunit beta (AccD).

The protein localises to the cytoplasm. The catalysed reaction is N(6)-carboxybiotinyl-L-lysyl-[protein] + acetyl-CoA = N(6)-biotinyl-L-lysyl-[protein] + malonyl-CoA. It participates in lipid metabolism; malonyl-CoA biosynthesis; malonyl-CoA from acetyl-CoA: step 1/1. Functionally, component of the acetyl coenzyme A carboxylase (ACC) complex. First, biotin carboxylase catalyzes the carboxylation of biotin on its carrier protein (BCCP) and then the CO(2) group is transferred by the carboxyltransferase to acetyl-CoA to form malonyl-CoA. In Neisseria meningitidis serogroup C / serotype 2a (strain ATCC 700532 / DSM 15464 / FAM18), this protein is Acetyl-coenzyme A carboxylase carboxyl transferase subunit alpha.